The chain runs to 367 residues: Anthranilate phosphoribosyltransferase (367 aa).

A compositionally biased stretch (low complexity) spans 1–17 (MVLSSEASSAADHSAAA). The tract at residues 1–22 (MVLSSEASSAADHSAAAPIPTS) is disordered. Residues G104, 107–108 (GD), T112, 114–117 (NLST), 132–140 (KHGNRAASS), and G144 each bind 5-phospho-alpha-D-ribose 1-diphosphate. G104 provides a ligand contact to anthranilate. S116 lines the Mg(2+) pocket. Position 135 (N135) interacts with anthranilate. R190 provides a ligand contact to anthranilate. Mg(2+) is bound by residues D248 and E249.

The protein belongs to the anthranilate phosphoribosyltransferase family. Homodimer. Mg(2+) serves as cofactor.

The catalysed reaction is N-(5-phospho-beta-D-ribosyl)anthranilate + diphosphate = 5-phospho-alpha-D-ribose 1-diphosphate + anthranilate. Its pathway is amino-acid biosynthesis; L-tryptophan biosynthesis; L-tryptophan from chorismate: step 2/5. In terms of biological role, catalyzes the transfer of the phosphoribosyl group of 5-phosphorylribose-1-pyrophosphate (PRPP) to anthranilate to yield N-(5'-phosphoribosyl)-anthranilate (PRA). In Mycobacterium ulcerans (strain Agy99), this protein is Anthranilate phosphoribosyltransferase.